The primary structure comprises 673 residues: Protein VirD3 (673 aa).

Disordered stretches follow at residues 36–73, 171–216, 229–409, 478–497, 520–552, and 585–673; these read VAGE…GRLG, SPVN…GTSV, ERDT…LRSS, RLNG…LEDF, EKGK…VTPL, and DSSR…GCGR. 4 stretches are compositionally biased toward polar residues: residues 171-183, 193-216, 234-246, and 268-277; these read SPVN…SNWQ, VQPS…GTSV, SETT…TISS, and QSLSVTVTTP. Residues 278–287 are compositionally biased toward low complexity; it reads NSNAEASSHS. The span at 288–303 shows a compositional bias: basic and acidic residues; that stretch reads AHTETLDDVSSDRSSE. 2 stretches are compositionally biased toward basic and acidic residues: residues 520 to 534 and 638 to 673; these read EKGK…DTRF and AAEH…GCGR.

The chain is Protein VirD3 (virD3) from Agrobacterium fabrum (strain C58 / ATCC 33970) (Agrobacterium tumefaciens (strain C58)).